A 464-amino-acid polypeptide reads, in one-letter code: Argininosuccinate lyase (464 aa).

It belongs to the lyase 1 family. Argininosuccinate lyase subfamily.

It localises to the cytoplasm. It carries out the reaction 2-(N(omega)-L-arginino)succinate = fumarate + L-arginine. Its pathway is amino-acid biosynthesis; L-arginine biosynthesis; L-arginine from L-ornithine and carbamoyl phosphate: step 3/3. The protein is Argininosuccinate lyase of Pseudomonas savastanoi pv. phaseolicola (strain 1448A / Race 6) (Pseudomonas syringae pv. phaseolicola (strain 1448A / Race 6)).